The following is a 249-amino-acid chain: Triosephosphate isomerase (249 aa).

Substrate is bound by residues asparagine 10 and lysine 12. Histidine 94 serves as the catalytic Electrophile. The Proton acceptor role is filled by glutamate 166.

The protein belongs to the triosephosphate isomerase family. Homodimer. The N-terminus is blocked.

The catalysed reaction is D-glyceraldehyde 3-phosphate = dihydroxyacetone phosphate. The protein operates within carbohydrate biosynthesis; gluconeogenesis. It participates in carbohydrate degradation; glycolysis; D-glyceraldehyde 3-phosphate from glycerone phosphate: step 1/1. The protein is Triosephosphate isomerase (TPI1) of Paracoccidioides lutzii (strain ATCC MYA-826 / Pb01) (Paracoccidioides brasiliensis).